The following is a 413-amino-acid chain: Glutamyl-tRNA reductase (413 aa).

Residues 57-60 (TCNR), Ser113, 118-120 (DFE), and Gln124 each bind substrate. Cys58 functions as the Nucleophile in the catalytic mechanism. An NADP(+)-binding site is contributed by 193–198 (GTGKIG).

This sequence belongs to the glutamyl-tRNA reductase family. As to quaternary structure, homodimer.

It catalyses the reaction (S)-4-amino-5-oxopentanoate + tRNA(Glu) + NADP(+) = L-glutamyl-tRNA(Glu) + NADPH + H(+). It participates in porphyrin-containing compound metabolism; protoporphyrin-IX biosynthesis; 5-aminolevulinate from L-glutamyl-tRNA(Glu): step 1/2. In terms of biological role, catalyzes the NADPH-dependent reduction of glutamyl-tRNA(Glu) to glutamate 1-semialdehyde (GSA). This chain is Glutamyl-tRNA reductase, found in Flavobacterium psychrophilum (strain ATCC 49511 / DSM 21280 / CIP 103535 / JIP02/86).